Here is a 60-residue protein sequence, read N- to C-terminus: Large ribosomal subunit protein bL32 (60 aa).

Belongs to the bacterial ribosomal protein bL32 family.

This is Large ribosomal subunit protein bL32 from Petrotoga mobilis (strain DSM 10674 / SJ95).